Reading from the N-terminus, the 424-residue chain is Enolase (424 aa).

Glutamine 162 contacts (2R)-2-phosphoglycerate. Glutamate 204 acts as the Proton donor in catalysis. Residues aspartate 241, glutamate 284, and aspartate 311 each coordinate Mg(2+). Positions 336, 365, 366, and 387 each coordinate (2R)-2-phosphoglycerate. The active-site Proton acceptor is the lysine 336.

The protein belongs to the enolase family. It depends on Mg(2+) as a cofactor.

The protein localises to the cytoplasm. It is found in the secreted. Its subcellular location is the cell surface. It catalyses the reaction (2R)-2-phosphoglycerate = phosphoenolpyruvate + H2O. Its pathway is carbohydrate degradation; glycolysis; pyruvate from D-glyceraldehyde 3-phosphate: step 4/5. In terms of biological role, catalyzes the reversible conversion of 2-phosphoglycerate (2-PG) into phosphoenolpyruvate (PEP). It is essential for the degradation of carbohydrates via glycolysis. In Parvibaculum lavamentivorans (strain DS-1 / DSM 13023 / NCIMB 13966), this protein is Enolase.